The chain runs to 171 residues: Cytochrome c oxidase subunit 5, mitochondrial (171 aa).

A mitochondrion-targeting transit peptide spans 1–27; sequence MLRTPTVSALVRNVAVRAAKPTMAVRA. At 28–100 the chain is on the mitochondrial matrix side; sequence ASTMPISNPT…ALPPPGEQKK (73 aa). The helical transmembrane segment at 101 to 123 threads the bilayer; the sequence is VLAYTVAGVFLSFVIFATMRAFA. The Mitochondrial intermembrane segment spans residues 124–171; the sequence is KPPPATMTKEWQEATNEFLKAQKSDPLTGLTSEGYNGKGHVQSPSASA. The disordered stretch occupies residues 145 to 171; it reads QKSDPLTGLTSEGYNGKGHVQSPSASA.

It belongs to the cytochrome c oxidase IV family. Component of the cytochrome c oxidase (complex IV, CIV), a multisubunit enzyme composed of 11 subunits. The complex is composed of a catalytic core of 3 subunits Cox1, Cox2 and Cox3, encoded in the mitochondrial DNA, and 8 supernumerary subunits Cox4, Cox5a/Cox5, Cox6, Cox7, Cox8, Cox7a/Cox9, Cox6b/Cox12 and Cox6a/Cox13, which are encoded in the nuclear genome. The complex exists as a monomer or a dimer and forms respiratory supercomplexes (SCs) in the inner mitochondrial membrane with NADH-ubiquinone oxidoreductase (complex I, CI) and ubiquinol-cytochrome c oxidoreductase (cytochrome b-c1 complex, complex III, CIII), resulting in various different assemblies (supercomplexes I(1)IV(1), I(1)III(3)IV(2), III(2)IV(1) and III(2)IV(2) as well as larger supercomplexes of compositions like I(1)III(2)IV(5-6)).

Its subcellular location is the mitochondrion inner membrane. The protein operates within energy metabolism; oxidative phosphorylation. Component of the cytochrome c oxidase, the last enzyme in the mitochondrial electron transport chain which drives oxidative phosphorylation. The respiratory chain contains 3 multisubunit complexes succinate dehydrogenase (complex II, CII), ubiquinol-cytochrome c oxidoreductase (cytochrome b-c1 complex, complex III, CIII) and cytochrome c oxidase (complex IV, CIV), that cooperate to transfer electrons derived from NADH and succinate to molecular oxygen, creating an electrochemical gradient over the inner membrane that drives transmembrane transport and the ATP synthase. Cytochrome c oxidase is the component of the respiratory chain that catalyzes the reduction of oxygen to water. Electrons originating from reduced cytochrome c in the intermembrane space (IMS) are transferred via the dinuclear copper A center (CU(A)) of Cox2 and heme A of Cox1 to the active site in Cox1, a binuclear center (BNC) formed by heme A3 and copper B (CU(B)). The BNC reduces molecular oxygen to 2 water molecules using 4 electrons from cytochrome c in the IMS and 4 protons from the mitochondrial matrix. In Neurospora crassa (strain ATCC 24698 / 74-OR23-1A / CBS 708.71 / DSM 1257 / FGSC 987), this protein is Cytochrome c oxidase subunit 5, mitochondrial (cya-4).